The sequence spans 139 residues: Phosphoribosyl-AMP cyclohydrolase (139 aa).

Asp95 is a binding site for Mg(2+). Cys96 provides a ligand contact to Zn(2+). 2 residues coordinate Mg(2+): Asp97 and Asp99. Zn(2+)-binding residues include Cys114 and Cys121.

This sequence belongs to the PRA-CH family. In terms of assembly, homodimer. Mg(2+) is required as a cofactor. Zn(2+) serves as cofactor.

The protein resides in the cytoplasm. It carries out the reaction 1-(5-phospho-beta-D-ribosyl)-5'-AMP + H2O = 1-(5-phospho-beta-D-ribosyl)-5-[(5-phospho-beta-D-ribosylamino)methylideneamino]imidazole-4-carboxamide. Its pathway is amino-acid biosynthesis; L-histidine biosynthesis; L-histidine from 5-phospho-alpha-D-ribose 1-diphosphate: step 3/9. Catalyzes the hydrolysis of the adenine ring of phosphoribosyl-AMP. This Chelativorans sp. (strain BNC1) protein is Phosphoribosyl-AMP cyclohydrolase.